We begin with the raw amino-acid sequence, 514 residues long: Transmembrane protein 151B (514 aa).

The tract at residues 1–40 is disordered; the sequence is MSAEGEPAEAVAETPANSPGEEAAAAAATTDVDVREEQRP. The next 3 helical transmembrane spans lie at 57 to 77, 104 to 124, and 286 to 306; these read CLLLSILMFVCLGAVTWCQVT, YVYIPLAFLAMLYVVYLVECW, and PWYVSHYAFWVAALFMLSWPL.

It belongs to the TMEM151 family.

Its subcellular location is the membrane. The polypeptide is Transmembrane protein 151B (tmem151b) (Xenopus tropicalis (Western clawed frog)).